We begin with the raw amino-acid sequence, 110 residues long: UPF0060 membrane protein Francci3_2786 (110 aa).

Transmembrane regions (helical) follow at residues 8 to 28 (LLFV…WQGV), 33 to 53 (GPVW…VATL), 62 to 82 (ILAA…VAVD), and 87 to 107 (DRYD…IMYA).

It belongs to the UPF0060 family.

It localises to the cell membrane. This is UPF0060 membrane protein Francci3_2786 from Frankia casuarinae (strain DSM 45818 / CECT 9043 / HFP020203 / CcI3).